The following is a 242-amino-acid chain: DNA repair protein RecO (242 aa).

This sequence belongs to the RecO family. As to quaternary structure, monomer.

In terms of biological role, involved in DNA repair and RecF pathway recombination. The chain is DNA repair protein RecO from Salmonella schwarzengrund (strain CVM19633).